We begin with the raw amino-acid sequence, 325 residues long: Elongation factor P--(R)-beta-lysine ligase (325 aa).

76 to 78 (SPE) serves as a coordination point for substrate. ATP-binding positions include 100–102 (RNE) and asparagine 109. Substrate is bound at residue tyrosine 118. 244–245 (EL) provides a ligand contact to ATP. Glutamate 251 is a substrate binding site. Glycine 300 serves as a coordination point for ATP.

The protein belongs to the class-II aminoacyl-tRNA synthetase family. EpmA subfamily. In terms of assembly, homodimer.

The enzyme catalyses D-beta-lysine + L-lysyl-[protein] + ATP = N(6)-((3R)-3,6-diaminohexanoyl)-L-lysyl-[protein] + AMP + diphosphate + H(+). Functionally, with EpmB is involved in the beta-lysylation step of the post-translational modification of translation elongation factor P (EF-P). Catalyzes the ATP-dependent activation of (R)-beta-lysine produced by EpmB, forming a lysyl-adenylate, from which the beta-lysyl moiety is then transferred to the epsilon-amino group of a conserved specific lysine residue in EF-P. The polypeptide is Elongation factor P--(R)-beta-lysine ligase (Yersinia enterocolitica serotype O:8 / biotype 1B (strain NCTC 13174 / 8081)).